The primary structure comprises 1216 residues: Metabotropic glycine receptor (1216 aa).

Positions 1-23 (MGVMAYPFLFCLLLVHFGLGAIG) are cleaved as a signal peptide. The Extracellular portion of the chain corresponds to 24 to 417 (ASREAPSRPD…CFVQEDKYLR (394 aa)). A disordered region spans residues 25 to 65 (SREAPSRPDPPRERTLRAKQHAQQPARASASDPSAPWSRST). A compositionally biased stretch (basic and acidic residues) spans 28 to 40 (APSRPDPPRERTL). The span at 46–64 (AQQPARASASDPSAPWSRS) shows a compositional bias: low complexity. The interval 85-281 (YLYTGDSHKL…CENGSYKPGW (197 aa)) is cache-like region. N-linked (GlcNAc...) asparagine glycosylation is found at asparagine 98 and asparagine 143. A disulfide bridge links cysteine 99 with cysteine 272. 2 residues coordinate glycine: serine 172 and arginine 173. The N-linked (GlcNAc...) asparagine glycan is linked to asparagine 215. Position 271 (glutamate 271) interacts with glycine. Residue asparagine 274 is glycosylated (N-linked (GlcNAc...) asparagine). Position 307 (aspartate 307) interacts with glycine. N-linked (GlcNAc...) asparagine glycosylation is present at asparagine 333. A helical transmembrane segment spans residues 418-439 (LAIISFQALCMLLDFLSMLVVY). Residues 440 to 451 (RFRKAKSIRASG) are Cytoplasmic-facing. Residues 452–474 (LILLETILFGSLLLYFPVVILYF) form a helical membrane-spanning segment. Topologically, residues 475–478 (EPST) are extracellular. A helical transmembrane segment spans residues 479 to 501 (FRCILLRWVRLLGFATVYGTVTL). The cysteines at positions 481 and 573 are disulfide-linked. The Cytoplasmic segment spans residues 502–525 (KLHRVLKVFLSRTAQRIPYMTGGR). The chain crosses the membrane as a helical span at residues 526 to 547 (VMRMLAVILLVVFWFLVGWTSS). The Extracellular portion of the chain corresponds to 548–576 (VCQNLERHISLIGQGRTSDHLIFSMCLVE). The chain crosses the membrane as a helical span at residues 577-597 (RWDYMTAAAEFLFLLWGVYLC). The Cytoplasmic segment spans residues 598 to 611 (YAVRTVPSAFHEPR). A helical transmembrane segment spans residues 612–633 (YMAVAVHNELIISAIFHTIRFV). At 634–642 (LASRLQSDW) the chain is on the extracellular side. A helical membrane pass occupies residues 643-664 (MLMLYFAHTHLTVTVTIGLLLI). The Cytoplasmic segment spans residues 665–1216 (PKFSHSSNNP…NEEVRLARKV (552 aa)). Serine 694, serine 705, and serine 708 each carry phosphoserine. Disordered regions lie at residues 757–875 (RITE…ESVP) and 911–1000 (KEKT…HMKD). The segment covering 769-781 (CSKEDKDGGEHGS) has biased composition (basic and acidic residues). Residue lysine 774 forms a Glycyl lysine isopeptide (Lys-Gly) (interchain with G-Cter in ubiquitin) linkage. The span at 864-873 (EDSQAVSTES) shows a compositional bias: polar residues. Serine 866 is modified (phosphoserine). Basic and acidic residues predominate over residues 926 to 944 (VEERAKAQKALPRERETNR). Composition is skewed to polar residues over residues 945–963 (KYSN…PNSS) and 980–991 (QRANPTTANSDL). Phosphoserine is present on serine 947. The VCPWE motif 1 motif lies at 1007 to 1011 (VCPWE). The disordered stretch occupies residues 1038 to 1072 (ERNPTFSLKEKSHPKPKAADLCQQSNPKSVDKAEV). A Phosphoserine modification is found at serine 1066. A VCPWE motif 2 motif is present at residues 1072–1076 (VCPWE). At serine 1081 the chain carries Phosphoserine. Residues 1128–1167 (SKVENENLNQLGEQEKKTSSSERNVPDSHNSSNNFQPPLM) form a disordered region. The segment covering 1140 to 1153 (EQEKKTSSSERNVP) has biased composition (basic and acidic residues). Polar residues predominate over residues 1154 to 1163 (DSHNSSNNFQ). The VCPWE motif 3 motif lies at 1172–1176 (VCPWE).

Belongs to the G-protein coupled receptor 3 family. As to quaternary structure, homodimer. Associates with the RGS7-GNB5 complex, promoting its localization to the cell membrane and regulating its GTPase activator activity. Interacts (via VCPWE motifs) with GNAO1. Interacts with GPC4. Interacts with EGFLAM.

Its subcellular location is the cell membrane. It is found in the postsynaptic cell membrane. The protein localises to the presynaptic cell membrane. It localises to the nucleus. Its function is as follows. Metabotropic receptor for glycine that controls synapse formation and function in the brain. Acts as an atypical G-protein coupled receptor that recruits and regulates the RGS7-GNB5 complex instead of activating G proteins. In absence of glycine ligand, promotes the GTPase activator activity of RGS7, increasing the GTPase activity of G protein alpha subunits, thereby driving them into their inactive GDP-bound form. Glycine-binding changes the conformation of the intracellular surface, inhibiting the GTPase activator activity of the RGS7-GNB5 complex, promoting G protein alpha subunits into their active GTP-bound form and regulating cAMP levels. Also able to bind taurine, a compound closely related to glycine, but with a two-fold lower affinity. Glycine receptor-dependent regulation of cAMP controls key ion channels, kinases and neurotrophic factors involved in neuronal excitability and synaptic transmission. Plays a pivotal role in regulating mood and cognition via its ability to regulate neuronal excitability in L2/L3 pyramidal neurons of the prefrontal cortex. Also involved in spatial learning by regulating hippocampal CA1 neuronal excitability. Acts as a synaptic organizer in the hippocampus, required for proper mossy fiber-CA3 neurocircuitry establishment, structure and function: induces presynaptic differentiation in contacting axons via its interaction with GPC4. In addition to glycine, may also act as a receptor for osteocalcin (BGLAP) hormone: osteocalcin-binding initiates a signaling response that prevents neuronal apoptosis in the hippocampus and regulates the synthesis of neurotransmitters. This chain is Metabotropic glycine receptor (GPR158), found in Bos taurus (Bovine).